The chain runs to 442 residues: Serine hydroxymethyltransferase (442 aa).

Residues Tyr-54, 100-102 (SGS), and His-236 each bind pyridoxal 5'-phosphate. Cys-125 and Cys-364 are joined by a disulfide. Position 237 is an N6-(pyridoxal phosphate)lysine (Lys-237). Position 272 (Gly-272) interacts with pyridoxal 5'-phosphate.

This sequence belongs to the SHMT family. In terms of assembly, homodimer. Pyridoxal 5'-phosphate serves as cofactor.

The protein localises to the cytoplasm. It localises to the mitochondrion matrix. Its subcellular location is the plastid. The protein resides in the apicoplast. It is found in the nucleus. It catalyses the reaction (6R)-5,10-methylene-5,6,7,8-tetrahydrofolate + glycine + H2O = (6S)-5,6,7,8-tetrahydrofolate + L-serine. It participates in one-carbon metabolism; tetrahydrofolate interconversion. With respect to regulation, redox regulation; active in reducing conditions, inactive in oxidizing conditions. The reduction of the cysteine pairs allows the access binding of the tetrahydrofolate substrate to its binding site. This mechanism appears to be unique to Plasmodium species. Catalyzes the interconversion of serine to glycine accompanied with the production of 5,10-methylenetetrahydrofolate, a source of one-carbon units used by thymidylate synthase to convert dUMP to dTMP for DNA synthesis. Binds to its own mRNA and to the mRNA of bifunctional dihydrofolate reductase-thymidylate synthase (DHFR-TS) in vitro; the physiological relevance of this interaction is not clear. The sequence is that of Serine hydroxymethyltransferase from Plasmodium falciparum (isolate 3D7).